An 85-amino-acid polypeptide reads, in one-letter code: MASKASGGSTRNGRDSISKRLGVKRYDGQVVRAGNILVRQRGTKIYPGKNVGMGKDYTLFALIDGKVKFETSKGKKVVSVYPVET.

Residues 1–11 (MASKASGGSTR) show a composition bias toward polar residues. Residues 1–20 (MASKASGGSTRNGRDSISKR) are disordered.

This sequence belongs to the bacterial ribosomal protein bL27 family.

This chain is Large ribosomal subunit protein bL27, found in Sulfurihydrogenibium sp. (strain YO3AOP1).